Reading from the N-terminus, the 308-residue chain is Ribosomal RNA small subunit methyltransferase H (308 aa).

S-adenosyl-L-methionine contacts are provided by residues 33 to 35 (GGY), aspartate 51, phenylalanine 82, aspartate 96, and glutamine 103.

This sequence belongs to the methyltransferase superfamily. RsmH family.

The protein localises to the cytoplasm. The catalysed reaction is cytidine(1402) in 16S rRNA + S-adenosyl-L-methionine = N(4)-methylcytidine(1402) in 16S rRNA + S-adenosyl-L-homocysteine + H(+). Its function is as follows. Specifically methylates the N4 position of cytidine in position 1402 (C1402) of 16S rRNA. This chain is Ribosomal RNA small subunit methyltransferase H, found in Rickettsia canadensis (strain McKiel).